Consider the following 252-residue polypeptide: Triosephosphate isomerase (252 aa).

Position 10–12 (10–12 (NWK)) interacts with substrate. H96 serves as the catalytic Electrophile. The active-site Proton acceptor is the E168. Substrate-binding positions include G174, S214, and 235 to 236 (GG).

Belongs to the triosephosphate isomerase family. As to quaternary structure, homodimer.

The protein resides in the cytoplasm. The catalysed reaction is D-glyceraldehyde 3-phosphate = dihydroxyacetone phosphate. Its pathway is carbohydrate biosynthesis; gluconeogenesis. It functions in the pathway carbohydrate degradation; glycolysis; D-glyceraldehyde 3-phosphate from glycerone phosphate: step 1/1. Its function is as follows. Involved in the gluconeogenesis. Catalyzes stereospecifically the conversion of dihydroxyacetone phosphate (DHAP) to D-glyceraldehyde-3-phosphate (G3P). The chain is Triosephosphate isomerase from Streptococcus gordonii (strain Challis / ATCC 35105 / BCRC 15272 / CH1 / DL1 / V288).